We begin with the raw amino-acid sequence, 110 residues long: Large ribosomal subunit protein uL22 (110 aa).

The protein belongs to the universal ribosomal protein uL22 family. Part of the 50S ribosomal subunit.

Its function is as follows. This protein binds specifically to 23S rRNA; its binding is stimulated by other ribosomal proteins, e.g. L4, L17, and L20. It is important during the early stages of 50S assembly. It makes multiple contacts with different domains of the 23S rRNA in the assembled 50S subunit and ribosome. Functionally, the globular domain of the protein is located near the polypeptide exit tunnel on the outside of the subunit, while an extended beta-hairpin is found that lines the wall of the exit tunnel in the center of the 70S ribosome. This chain is Large ribosomal subunit protein uL22, found in Yersinia enterocolitica serotype O:8 / biotype 1B (strain NCTC 13174 / 8081).